The chain runs to 444 residues: Putative dipeptidase CPC735_015490 (444 aa).

The N-terminal stretch at 1–34 (MSQRTEHNGSWLRNAGSLLSVLACVAVLASPASA) is a signal peptide. Histidine 67, aspartate 69, and glutamate 178 together coordinate Zn(2+). Cysteine 118 and cysteine 207 form a disulfide bridge. Residue histidine 205 coordinates substrate. The Zn(2+) site is built by histidine 250 and histidine 271. Substrate contacts are provided by arginine 282 and aspartate 342. A glycan (N-linked (GlcNAc...) asparagine) is linked at asparagine 413.

The protein belongs to the metallo-dependent hydrolases superfamily. Peptidase M19 family. Zn(2+) is required as a cofactor.

The enzyme catalyses an L-aminoacyl-L-amino acid + H2O = 2 an L-alpha-amino acid. In terms of biological role, hydrolyzes a wide range of dipeptides. This chain is Putative dipeptidase CPC735_015490, found in Coccidioides posadasii (strain C735) (Valley fever fungus).